Reading from the N-terminus, the 133-residue chain is MARVKRGVTSHAKHKKVLKAAKGFYGRRKNTIRIAKQAVEKSLQYAYRDRKNRKRSFRALWIQRINAATHEHGLTYGRFIDGLNKAGIEIDRKILSDMAIHEPQAFAALVAKAKVALEYLKNTTPNAFESAVA.

This sequence belongs to the bacterial ribosomal protein bL20 family.

In terms of biological role, binds directly to 23S ribosomal RNA and is necessary for the in vitro assembly process of the 50S ribosomal subunit. It is not involved in the protein synthesizing functions of that subunit. This is Large ribosomal subunit protein bL20 from Mesorhizobium japonicum (strain LMG 29417 / CECT 9101 / MAFF 303099) (Mesorhizobium loti (strain MAFF 303099)).